The primary structure comprises 355 residues: Phosphatidylinositol:ceramide inositolphosphotransferase (355 aa).

The Cytoplasmic segment spans residues 1–44 (MISYPFFSLSPPGLVPPPMAVPPVEMYSGSFWNRMRKPLPLRTQ). The chain crosses the membrane as a helical span at residues 45-65 (VIRFTVVFVIVSFILAVALQI). Residues 66–89 (THERMPDPKVTKPLPDLGFELLTK) lie on the Extracellular side of the membrane. The helical transmembrane segment at 90–110 (ISFLSVVTDVLIAFLSSLSFF) threads the bilayer. Residues 111–165 (TLWKLYLLHRHCVGSGEPELPCNIPGVSRFFLSVWLCKENCRIELRNVHTIAWIR) lie on the Cytoplasmic side of the membrane. Residues 166–186 (FITSYALLLLFRSLVIVMTSM) traverse the membrane as a helical segment. The Extracellular portion of the chain corresponds to 187–205 (PTPVDKCQNPPKIENPVKN). Residues 206-226 (VILTVLTAGGGSIHCGDLMYS) traverse the membrane as a helical segment. At 227-251 (GHTVILTLHLMFHWIYGAMVHWSFR) the chain is on the cytoplasmic side. Catalysis depends on residues His228, His271, and Asp275. Residues 252-272 (PVVTVVAIFGYYCIVASRSHY) form a helical membrane-spanning segment. Topologically, residues 273 to 275 (TDD) are extracellular. The chain crosses the membrane as a helical span at residues 276–296 (VLVAIYLTIATFIAVGHNADG). Residues 297 to 355 (APWQLQLFIRWLPCCGANSREVTEDSQPVMVAFKSEAVDELRERDDSAGLSCEVSTNEV) lie on the Cytoplasmic side of the membrane.

It belongs to the sphingomyelin synthase family.

Its subcellular location is the membrane. Functionally, bidirectional lipid inositolphosphotransferase capable of converting phosphatidylinositol (PI) and ceramide to inositol-phosphorylceramide (IPC) and diacylglycerol (DAG) and vice versa. Direction is dependent on the relative concentrations of DAG and ceramide as phosphoinositol acceptors. Does not function strictly as a SM synthase. Essential for viability of the pathogenic bloodstream stage of this human protozoan parasite and, consequently, can be considered as potential drug target. In Trypanosoma brucei brucei (strain 927/4 GUTat10.1), this protein is Phosphatidylinositol:ceramide inositolphosphotransferase.